Consider the following 122-residue polypeptide: Large ribosomal subunit protein uL18 (122 aa).

The interval 1 to 20 (MFKKVSKNANRLSRHQRVRN) is disordered.

The protein belongs to the universal ribosomal protein uL18 family. In terms of assembly, part of the 50S ribosomal subunit; part of the 5S rRNA/L5/L18/L25 subcomplex. Contacts the 5S and 23S rRNAs.

Its function is as follows. This is one of the proteins that bind and probably mediate the attachment of the 5S RNA into the large ribosomal subunit, where it forms part of the central protuberance. This is Large ribosomal subunit protein uL18 from Alkaliphilus oremlandii (strain OhILAs) (Clostridium oremlandii (strain OhILAs)).